Consider the following 947-residue polypeptide: Protein NLP8 (947 aa).

Disordered regions lie at residues 114–135, 509–533, and 550–591; these read RSSA…ELSG, STKK…TTSS, and SMFS…EKNV. The segment covering 126–135 has biased composition (basic and acidic residues); the sequence is RSSDSDELSG. Composition is skewed to polar residues over residues 522–533 and 550–572; these read SDMSNFPQTTSS and SMFS…TLEQ. The segment covering 573 to 587 has biased composition (basic and acidic residues); that stretch reads DVSKARTPEKKKSTT. In terms of domain architecture, RWP-RK spans 577-671; sequence ARTPEKKKST…LDSVQGVEGG (95 aa). Positions 646-666 form a coiled coil; sequence RKINKVNRSLRKIQTVLDSVQ. The segment covering 805-815 has biased composition (low complexity); it reads SCSISDSSNGS. The interval 805-828 is disordered; sequence SCSISDSSNGSGAVLRGSSSTSME. The PB1 domain occupies 847–929; the sequence is TLIVKASYRE…HSVKFLVRDL (83 aa).

The protein resides in the nucleus. Probable transcription factor. The polypeptide is Protein NLP8 (NLP8) (Arabidopsis thaliana (Mouse-ear cress)).